Consider the following 178-residue polypeptide: Zinc finger CCHC domain-containing protein 10 (178 aa).

The CCHC-type zinc-finger motif lies at 21-38 (VRCQKCLEFGHWTYECKG). The interval 66 to 178 (QSIGETNIEK…EPQKKKKKKK (113 aa)) is disordered. Low complexity-rich tracts occupy residues 85 to 113 (SVTS…SSSS) and 121 to 164 (SLSS…SSES).

This chain is Zinc finger CCHC domain-containing protein 10 (Zcchc10), found in Mus musculus (Mouse).